Reading from the N-terminus, the 65-residue chain is MAVPKKKTSKSKRNMRRSHLALGKINVIVDSHTGEYKLPHHISLVDGTYNNRQVVTKKIDTEEVA.

Belongs to the bacterial ribosomal protein bL32 family.

In Rickettsia prowazekii (strain Madrid E), this protein is Large ribosomal subunit protein bL32 (rpmF).